The primary structure comprises 257 residues: Tryptophan synthase alpha chain (257 aa).

Residues Glu-51 and Asp-62 each act as proton acceptor in the active site.

Belongs to the TrpA family. In terms of assembly, tetramer of two alpha and two beta chains.

The catalysed reaction is (1S,2R)-1-C-(indol-3-yl)glycerol 3-phosphate + L-serine = D-glyceraldehyde 3-phosphate + L-tryptophan + H2O. Its pathway is amino-acid biosynthesis; L-tryptophan biosynthesis; L-tryptophan from chorismate: step 5/5. Its function is as follows. The alpha subunit is responsible for the aldol cleavage of indoleglycerol phosphate to indole and glyceraldehyde 3-phosphate. The protein is Tryptophan synthase alpha chain of Nitratidesulfovibrio vulgaris (strain ATCC 29579 / DSM 644 / CCUG 34227 / NCIMB 8303 / VKM B-1760 / Hildenborough) (Desulfovibrio vulgaris).